Reading from the N-terminus, the 389-residue chain is S-adenosylmethionine synthase (389 aa).

H15 contacts ATP. D17 lines the Mg(2+) pocket. E43 provides a ligand contact to K(+). L-methionine-binding residues include E56 and Q99. Residues 99-109 (QSSDIQYSIDH) form a flexible loop region. Residues 166–168 (DAK), 232–233 (RF), D241, 247–248 (RK), S264, and K268 each bind ATP. An L-methionine-binding site is contributed by D241. K272 contacts L-methionine.

It belongs to the AdoMet synthase family. Homotetramer; dimer of dimers. Mg(2+) is required as a cofactor. K(+) serves as cofactor.

The protein resides in the cytoplasm. It carries out the reaction L-methionine + ATP + H2O = S-adenosyl-L-methionine + phosphate + diphosphate. It participates in amino-acid biosynthesis; S-adenosyl-L-methionine biosynthesis; S-adenosyl-L-methionine from L-methionine: step 1/1. Catalyzes the formation of S-adenosylmethionine (AdoMet) from methionine and ATP. The overall synthetic reaction is composed of two sequential steps, AdoMet formation and the subsequent tripolyphosphate hydrolysis which occurs prior to release of AdoMet from the enzyme. In Blochmanniella pennsylvanica (strain BPEN), this protein is S-adenosylmethionine synthase.